We begin with the raw amino-acid sequence, 188 residues long: Inner membrane-spanning protein YciB (188 aa).

5 consecutive transmembrane segments (helical) span residues 23-43, 49-69, 73-93, 116-133, and 149-169; these read FQKATWVLVAASAAALAIGYA, AMLPLFFGGMALVFGTLGLIF, VFVKIKVTVINLALASFLVGG, WRTLTLRYGAYFAFVAII, and FRLALLPVALVFVATQLPFMM.

Belongs to the YciB family.

The protein resides in the cell inner membrane. Its function is as follows. Plays a role in cell envelope biogenesis, maintenance of cell envelope integrity and membrane homeostasis. The protein is Inner membrane-spanning protein YciB of Caulobacter vibrioides (strain ATCC 19089 / CIP 103742 / CB 15) (Caulobacter crescentus).